The chain runs to 411 residues: Arginine deiminase (411 aa).

Cysteine 399 serves as the catalytic Amidino-cysteine intermediate.

The protein belongs to the arginine deiminase family.

It is found in the cytoplasm. The catalysed reaction is L-arginine + H2O = L-citrulline + NH4(+). The protein operates within amino-acid degradation; L-arginine degradation via ADI pathway; carbamoyl phosphate from L-arginine: step 1/2. The protein is Arginine deiminase of Latilactobacillus sakei subsp. sakei (strain 23K) (Lactobacillus sakei subsp. sakei).